The chain runs to 522 residues: Glutamyl-tRNA(Gln) amidotransferase subunit A (522 aa).

Active-site charge relay system residues include lysine 88 and serine 163. The active-site Acyl-ester intermediate is serine 187.

This sequence belongs to the amidase family. GatA subfamily. As to quaternary structure, heterotrimer of A, B and C subunits.

The catalysed reaction is L-glutamyl-tRNA(Gln) + L-glutamine + ATP + H2O = L-glutaminyl-tRNA(Gln) + L-glutamate + ADP + phosphate + H(+). Allows the formation of correctly charged Gln-tRNA(Gln) through the transamidation of misacylated Glu-tRNA(Gln) in organisms which lack glutaminyl-tRNA synthetase. The reaction takes place in the presence of glutamine and ATP through an activated gamma-phospho-Glu-tRNA(Gln). This Paenarthrobacter aurescens (strain TC1) protein is Glutamyl-tRNA(Gln) amidotransferase subunit A.